A 92-amino-acid polypeptide reads, in one-letter code: Small ribosomal subunit protein uS19 (92 aa).

It belongs to the universal ribosomal protein uS19 family.

Protein S19 forms a complex with S13 that binds strongly to the 16S ribosomal RNA. The polypeptide is Small ribosomal subunit protein uS19 (Albidiferax ferrireducens (strain ATCC BAA-621 / DSM 15236 / T118) (Rhodoferax ferrireducens)).